Reading from the N-terminus, the 609-residue chain is MLFLRFFIFTFFTSIFTVVVSEPPVSAKFAKRVLSATSSSSSTCPEFITIFSEGPSEYITTIYPSSKSSGRGTTNHSTIYTTINSGTVASTYTVTLADGDVVVKDIEPTAGTVTTTITSGSHEFTTTLAEASGTVPGTVEVVEPLAGTVTTTIHSGSVEYNTTLATASGTVPGTVEVVEPAVGTVTTTIYSGSEEFTTTLASASGSISGTVEVIEPTAGTVTTTIYSGDQEYTTILAEASGTVPGTVEVIEPAVGTVTTTTYSGSVEYTTTLVPASGSVSGTVEVVEPAVGTVTTTLQSGSQAFTTTVPASGSVSGTVEVVQPTGGTVTNTVYEGSQTITSTLATASGTVPGTVEVILPGPSTIYSGTVATTITYDVSSTPASTVVVIPTAVCNGERGLQYAVYNYDISSSKNQFCATSGVTDVSSFTQPAYFGSSDLDQSSPLFTGVLSSSDSVPQWTSSYNLPGYPPDATAMGSTSSACKVIVYQFFFRVPVTDTFSLDVTNVDDVFYGWFGDKAISGWSNTNYDTYAYWHATNGQTGIASFSMGSLTADTYVPVRFVVANGAGKGGFDFSFVDSEGNSYNPTSYAYTATCTESFLPFGQGNGGVDN.

Positions 1-21 are cleaved as a signal peptide; the sequence is MLFLRFFIFTFFTSIFTVVVS. Asn75 is a glycosylation site (N-linked (GlcNAc...) asparagine). Positions 75 to 391 are 9 X 36 AA approximate tandem repeats; it reads NHSTIYTTIN…ASTVVVIPTA (317 aa). 9 consecutive repeat copies span residues 77–110, 111–146, 147–182, 183–218, 219–254, 255–290, 291–325, 326–361, and 362–391. The N-linked (GlcNAc...) asparagine glycan is linked to Asn161. Residues 427–589 enclose the PA14 domain; it reads FTQPAYFGSS…NSYNPTSYAY (163 aa).

Belongs to the mam3/map4 family.

The protein resides in the cell surface. Functionally, may be involved in agglutination during conjugation or other aspects of colony formation. Induces flocculation when overexpressed. This chain is Putative cell agglutination protein pfl4, found in Schizosaccharomyces pombe (strain 972 / ATCC 24843) (Fission yeast).